A 332-amino-acid polypeptide reads, in one-letter code: ADP-L-glycero-D-manno-heptose-6-epimerase (332 aa).

Residues 13–14 (FI), 34–35 (DN), K41, K56, 78–82 (EGACS), and N95 contribute to the NADP(+) site. The active-site Proton acceptor is Y142. NADP(+) is bound at residue K146. Residue N171 coordinates substrate. V172 and K180 together coordinate NADP(+). K180 functions as the Proton acceptor in the catalytic mechanism. Substrate-binding positions include R182, H189, 203–206 (FEGC), R216, and Y295.

The protein belongs to the NAD(P)-dependent epimerase/dehydratase family. HldD subfamily. Homopentamer. It depends on NADP(+) as a cofactor.

The catalysed reaction is ADP-D-glycero-beta-D-manno-heptose = ADP-L-glycero-beta-D-manno-heptose. It functions in the pathway nucleotide-sugar biosynthesis; ADP-L-glycero-beta-D-manno-heptose biosynthesis; ADP-L-glycero-beta-D-manno-heptose from D-glycero-beta-D-manno-heptose 7-phosphate: step 4/4. Catalyzes the interconversion between ADP-D-glycero-beta-D-manno-heptose and ADP-L-glycero-beta-D-manno-heptose via an epimerization at carbon 6 of the heptose. This is ADP-L-glycero-D-manno-heptose-6-epimerase from Thiobacillus denitrificans (strain ATCC 25259 / T1).